The primary structure comprises 2742 residues: Polycystin-1-like protein 1 (2742 aa).

Residues 1–1602 (MFCLWIFSLA…LDQFLSVSRD (1602 aa)) lie on the Extracellular side of the membrane. Residues Asn35, Asn133, Asn149, Asn220, and Asn267 are each glycosylated (N-linked (GlcNAc...) asparagine). PKD domains follow at residues 286 to 372 (AVRI…VKLN) and 370 to 454 (KLNR…PCQP). N-linked (GlcNAc...) asparagine glycans are attached at residues Asn383, Asn397, Asn486, Asn545, Asn693, Asn709, and Asn735. An REJ domain is found at 452–1338 (CQPPPVKNLG…ITFFLPASLI (887 aa)). 2 disordered regions span residues 767 to 829 (SPSR…QSDP) and 846 to 908 (DLRG…RPSV). Over residues 779-799 (SELTDSPVSSVTVGFSGSESF) the composition is skewed to polar residues. Low complexity predominate over residues 880–893 (SFPSDSDSFSHSSS). Residues Asn1080, Asn1101, Asn1201, Asn1318, Asn1437, Asn1490, and Asn1568 are each glycosylated (N-linked (GlcNAc...) asparagine). The GAIN-B domain maps to 1436–1587 (HNFSITQEHL…KVLQQQIQSS (152 aa)). Intrachain disulfides connect Cys1541–Cys1569 and Cys1556–Cys1571. Positions 1541–1587 (CLSWEDQQGSWTQNGCRAQTNDKTSAVNCSCHHLKPLKVLQQQIQSS) are GPS. Residues 1603 to 1623 (LTVVFVLLLCVSLNIPVLVWC) traverse the membrane as a helical segment. The Cytoplasmic segment spans residues 1624-1812 (KKTDATSEEN…SPHLFTRAQR (189 aa)). In terms of domain architecture, PLAT spans 1648-1769 (HFYAVTVHTG…GDGQVERMLR (122 aa)). Residues 1813-1833 (LCVCLLLFLGYACVNIIITHQ) traverse the membrane as a helical segment. The Extracellular segment spans residues 1834–1851 (RDDQLPFDLGVIDVTSVS). A helical transmembrane segment spans residues 1852-1872 (IATGLVSVVAVLPVAMVISFL). Over 1873–2005 (FRVKSGRMTL…YRLASLLYHC (133 aa)) the chain is Cytoplasmic. The chain crosses the membrane as a helical span at residues 2006–2026 (VAWTLCLLFCLSCLILSAVLG). Residues 2027–2040 (TRLNSGKILHWIHS) lie on the Extracellular side of the membrane. The helical transmembrane segment at 2041–2061 (LFVSLTFCFFVIHPATILVLA) threads the bilayer. Residues 2062–2151 (AVVSWRFKRS…KQAVIHKMLR (90 aa)) lie on the Cytoplasmic side of the membrane. Residues 2152–2172 (DLCLCGSMFFLMVCITYGSPV) form a helical membrane-spanning segment. Topologically, residues 2173–2344 (DEHYPLNAAF…QSVRLYHSPS (172 aa)) are extracellular. Residue Asn2218 is glycosylated (N-linked (GlcNAc...) asparagine). The chain crosses the membrane as a helical span at residues 2345 to 2365 (MLDYTVMVWQLLFLLLSLVNL). Residues 2366–2378 (YHQTSTAAQHGLM) are Cytoplasmic-facing. Residues 2379–2401 (GYWKTTSISVEVSLVIVSLVYYV) traverse the membrane as a helical segment. Residues 2402–2442 (HYVYHPTMVMEVAEQLRRNHREHVDVSTLANSEQFSRTLRG) are Extracellular-facing. A helical transmembrane segment spans residues 2443–2463 (IILFLLAVKCVTVVRLNRILA). The Cytoplasmic segment spans residues 2464-2467 (PSMP). A helical transmembrane segment spans residues 2468-2488 (LLSLSSLLWPAISGLLLLSIF). Residues 2489–2528 (SCMGRLLYIERTFHSIQTVLWHFWSLRKSRDLISLWRDFY) are Extracellular-facing. A helical membrane pass occupies residues 2529 to 2549 (YFGLLYASSAMLTTMVFAVMI). Over 2550–2742 (RKAKRSPSTK…LVHHEQGTKN (193 aa)) the chain is Cytoplasmic.

This sequence belongs to the polycystin family. Heterodimer. Interacts with pkd2 to form a calcium channel. Interacts with pkd2l1 to form ciliary calcium channel. As to expression, expressed in Kupffer's vesicle, an organ equivalent to the node.

Its subcellular location is the cell projection. The protein localises to the cilium membrane. In terms of biological role, component of a calcium-permeant ion channel formed by PKD1L2 and PKD1L1 in primary cilia, where it controls cilium calcium concentration, without affecting cytoplasmic calcium concentration, and regulates sonic hedgehog/SHH signaling and GLI2 transcription. The PKD1L1:PKD2L1 channel complex is mechanosensitive only at high pressures and is highly temperature sensitive. Also involved in left/right axis specification downstream of nodal flow by forming a complex with PKD2 in cilia to facilitate flow detection in left/right patterning. The chain is Polycystin-1-like protein 1 from Oryzias latipes (Japanese rice fish).